Reading from the N-terminus, the 103-residue chain is Pyrimidine/purine nucleoside phosphorylase (103 aa).

It belongs to the nucleoside phosphorylase PpnP family.

It carries out the reaction a purine D-ribonucleoside + phosphate = a purine nucleobase + alpha-D-ribose 1-phosphate. It catalyses the reaction adenosine + phosphate = alpha-D-ribose 1-phosphate + adenine. The enzyme catalyses cytidine + phosphate = cytosine + alpha-D-ribose 1-phosphate. The catalysed reaction is guanosine + phosphate = alpha-D-ribose 1-phosphate + guanine. It carries out the reaction inosine + phosphate = alpha-D-ribose 1-phosphate + hypoxanthine. It catalyses the reaction thymidine + phosphate = 2-deoxy-alpha-D-ribose 1-phosphate + thymine. The enzyme catalyses uridine + phosphate = alpha-D-ribose 1-phosphate + uracil. The catalysed reaction is xanthosine + phosphate = alpha-D-ribose 1-phosphate + xanthine. Its function is as follows. Catalyzes the phosphorolysis of diverse nucleosides, yielding D-ribose 1-phosphate and the respective free bases. Can use uridine, adenosine, guanosine, cytidine, thymidine, inosine and xanthosine as substrates. Also catalyzes the reverse reactions. The sequence is that of Pyrimidine/purine nucleoside phosphorylase from Nocardia farcinica (strain IFM 10152).